We begin with the raw amino-acid sequence, 218 residues long: MHLNVVNLGRCEYEKALQVQIELLEKRQRGEIEDTLILVEHPPVITKGRHADETNIIGSEASLINHGIQLFNTDRGGDVTYHGPGQIVGYPIVNIRKSKIGVKKFVENLEEVLIRLLDEKYHITATRSSVNPGVWVGANKIAAIGLAVKRGVSMHGFALNVSTNLAHFKFLVPCGIADRGVTSIEEILGYPVDFHVANQHVLAYFSEVFNYDIIETVE.

The BPL/LPL catalytic domain maps to 30 to 213; sequence GEIEDTLILV…YFSEVFNYDI (184 aa). Substrate-binding positions include 75–82, 143–145, and 156–158; these read RGGDVTYH, AIG, and GFA. Catalysis depends on Cys-174, which acts as the Acyl-thioester intermediate.

It belongs to the LipB family.

It localises to the cytoplasm. It carries out the reaction octanoyl-[ACP] + L-lysyl-[protein] = N(6)-octanoyl-L-lysyl-[protein] + holo-[ACP] + H(+). The protein operates within protein modification; protein lipoylation via endogenous pathway; protein N(6)-(lipoyl)lysine from octanoyl-[acyl-carrier-protein]: step 1/2. Its function is as follows. Catalyzes the transfer of endogenously produced octanoic acid from octanoyl-acyl-carrier-protein onto the lipoyl domains of lipoate-dependent enzymes. Lipoyl-ACP can also act as a substrate although octanoyl-ACP is likely to be the physiological substrate. The chain is Octanoyltransferase from Alkaliphilus metalliredigens (strain QYMF).